The chain runs to 27 residues: uncharacterized protein (27 aa).

Residues 6–26 (IIVLGALIALLELIRFLLQLL) traverse the membrane as a helical segment.

This sequence belongs to the DinQ family.

It localises to the cell inner membrane. This is an uncharacterized protein from Escherichia coli (strain K12).